The sequence spans 163 residues: Cyanate hydratase (163 aa).

Active-site residues include arginine 103, glutamate 106, and serine 129.

The protein belongs to the cyanase family.

The catalysed reaction is cyanate + hydrogencarbonate + 3 H(+) = NH4(+) + 2 CO2. Catalyzes the reaction of cyanate with bicarbonate to produce ammonia and carbon dioxide. This chain is Cyanate hydratase, found in Paracoccidioides brasiliensis (strain Pb18).